Reading from the N-terminus, the 652-residue chain is Threonine--tRNA ligase (652 aa).

Positions 1–61 (MIKLKLPDGS…DRDAEVEIVT (61 aa)) constitute a TGS domain. Residues 243–548 (DHRKIGREMD…LIENYEGRFP (306 aa)) form a catalytic region. 3 residues coordinate Zn(2+): Cys-348, His-399, and His-525.

The protein belongs to the class-II aminoacyl-tRNA synthetase family. In terms of assembly, homodimer. Zn(2+) is required as a cofactor.

It localises to the cytoplasm. It carries out the reaction tRNA(Thr) + L-threonine + ATP = L-threonyl-tRNA(Thr) + AMP + diphosphate + H(+). Functionally, catalyzes the attachment of threonine to tRNA(Thr) in a two-step reaction: L-threonine is first activated by ATP to form Thr-AMP and then transferred to the acceptor end of tRNA(Thr). Also edits incorrectly charged L-seryl-tRNA(Thr). The sequence is that of Threonine--tRNA ligase from Parvibaculum lavamentivorans (strain DS-1 / DSM 13023 / NCIMB 13966).